The following is a 489-amino-acid chain: Inositol-pentakisphosphate 2-kinase (489 aa).

Residues 136–140 (EIKPK) carry the EXKPK motif motif.

This sequence belongs to the IPK1 type 2 family. In terms of tissue distribution, in brain, it is expressed throughout the hippocampus (CA1, CA2, CA3 and dentate gyrus), inner layers of the cerebral cortex, and Purkinje cells of the cerebellum. In heart, it is expressed in cardiomyocytes but not in interstitial cells, blood vessels, or valves. Also expressed in testis.

It is found in the cytoplasm. Its subcellular location is the nucleus. It catalyses the reaction 1D-myo-inositol 1,3,4,5,6-pentakisphosphate + ATP = 1D-myo-inositol hexakisphosphate + ADP + H(+). Phosphorylates Ins(1,3,4,5,6)P5 at position 2 to form Ins(1,2,3,4,5,6)P6 (InsP6 or phytate). InsP6 is involved in many processes such as mRNA export, non-homologous end-joining, endocytosis, ion channel regulation. It also protects cells from TNF-alpha-induced apoptosis. The sequence is that of Inositol-pentakisphosphate 2-kinase (Ippk) from Mus musculus (Mouse).